The following is a 594-amino-acid chain: DELLA protein 1 (594 aa).

The disordered stretch occupies residues 1 to 36; it reads MKREHQESFGGGVISNNNKTNTNHLNSSKNINFGEC. Residues 15-30 are compositionally biased toward low complexity; that stretch reads SNNNKTNTNHLNSSKN. Positions 61-65 match the DELLA motif motif; sequence DELLA. Residues 207–587 form the GRAS domain; it reads VDTQETGVRL…RSLIATSAWK (381 aa). The leucine repeat I (LRI) stretch occupies residues 214 to 268; that stretch reads VRLVHTLMACAEAIQQKNLKLAEALVKHISLLASLQTGAMRKVASYFAQALARRI. Residues 216 to 253 form a required for possible homodimerization region; that stretch reads LVHTLMACAEAIQQKNLKLAEALVKHISLLASLQTGAM. The LxCxE motif; degenerate signature appears at 221 to 225; it reads MACAE. Residues 285-350 are VHIID; that stretch reads HMHFYESSPY…GGPPTFRLTG (66 aa). Positions 316-320 match the VHIID motif; the sequence is VHVID. Residues 364–396 form a leucine repeat II (LRII) region; sequence QVGWKLAQLAQTIGVQFEFRGFVCNSIADLDPN. The tract at residues 406 to 508 is PFYRE; it reads VAVNSVFELH…EIYLGKQICN (103 aa). The LXXLL motif; degenerate motif lies at 414-418; sequence LHTML. Positions 511-587 are SAW; it reads AYEGVDRVER…RSLIATSAWK (77 aa).

It belongs to the GRAS family. DELLA subfamily. May be a homodimer. Post-translationally, ubiquitinated. Upon GA application it is ubiquitinated, leading to its subsequent degradation. As to expression, strongly expressed in the vascular tissue and endodermis but barely in the inner cortical cells where arbuscule are formed during arbuscular mycorrhizal (AM) symbiosis.

The protein localises to the nucleus. Probable transcriptional regulator that acts as a repressor of the gibberellin (GA) signaling pathway. Probably acts by participating in large multiprotein complexes that repress transcription of GA-inducible genes. Upon GA application, it is degraded by the proteasome, allowing the GA signaling pathway. Together with DELLA2, required to enable arbuscule development during arbuscular mycorrhizal (AM) symbiosis with AM fungi (e.g. Glomus versiforme) via the regulation of RAM1 which, in turn, regulates various AM genes (e.g. NSP1, NSP2, PT4, LEC5, RAM2, EXO70I, STR and RAD1). The chain is DELLA protein 1 from Medicago truncatula (Barrel medic).